The following is a 320-amino-acid chain: Aspartate carbamoyltransferase catalytic subunit (320 aa).

2 residues coordinate carbamoyl phosphate: Arg-53 and Thr-54. Lys-82 serves as a coordination point for L-aspartate. Residues Arg-103, His-131, and Gln-134 each contribute to the carbamoyl phosphate site. The L-aspartate site is built by Arg-164 and Arg-227. Residues Leu-266 and Pro-267 each contribute to the carbamoyl phosphate site.

It belongs to the aspartate/ornithine carbamoyltransferase superfamily. ATCase family. Heterododecamer (2C3:3R2) of six catalytic PyrB chains organized as two trimers (C3), and six regulatory PyrI chains organized as three dimers (R2).

It carries out the reaction carbamoyl phosphate + L-aspartate = N-carbamoyl-L-aspartate + phosphate + H(+). It functions in the pathway pyrimidine metabolism; UMP biosynthesis via de novo pathway; (S)-dihydroorotate from bicarbonate: step 2/3. Catalyzes the condensation of carbamoyl phosphate and aspartate to form carbamoyl aspartate and inorganic phosphate, the committed step in the de novo pyrimidine nucleotide biosynthesis pathway. This is Aspartate carbamoyltransferase catalytic subunit from Bifidobacterium longum subsp. infantis (strain ATCC 15697 / DSM 20088 / JCM 1222 / NCTC 11817 / S12).